The sequence spans 212 residues: Synaptosomal-associated protein 25 (212 aa).

T-SNARE coiled-coil homology domains lie at 26 to 88 (QGVA…LSGM) and 148 to 210 (DARE…AHQL).

The protein belongs to the SNAP-25 family. Exclusively found in brain and ganglia.

The protein resides in the synapse. The protein localises to the synaptosome. In terms of biological role, may play an important role in the synaptic function of specific neuronal systems. Associates with proteins involved in vesicle docking and membrane fusion. The polypeptide is Synaptosomal-associated protein 25 (Snap25) (Drosophila melanogaster (Fruit fly)).